Reading from the N-terminus, the 274-residue chain is 3-methyl-2-oxobutanoate hydroxymethyltransferase (274 aa).

Mg(2+)-binding residues include D46 and D85. Residues 46-47 (DS), D85, and K114 contribute to the 3-methyl-2-oxobutanoate site. E116 contacts Mg(2+). E183 acts as the Proton acceptor in catalysis.

Belongs to the PanB family. In terms of assembly, homodecamer; pentamer of dimers. The cofactor is Mg(2+).

The protein resides in the cytoplasm. The catalysed reaction is 3-methyl-2-oxobutanoate + (6R)-5,10-methylene-5,6,7,8-tetrahydrofolate + H2O = 2-dehydropantoate + (6S)-5,6,7,8-tetrahydrofolate. It functions in the pathway cofactor biosynthesis; coenzyme A biosynthesis. In terms of biological role, catalyzes the reversible reaction in which hydroxymethyl group from 5,10-methylenetetrahydrofolate is transferred onto alpha-ketoisovalerate to form ketopantoate. This is 3-methyl-2-oxobutanoate hydroxymethyltransferase from Aeropyrum pernix (strain ATCC 700893 / DSM 11879 / JCM 9820 / NBRC 100138 / K1).